The following is a 620-amino-acid chain: Chaperone protein HscA homolog (620 aa).

Belongs to the heat shock protein 70 family.

Functionally, chaperone involved in the maturation of iron-sulfur cluster-containing proteins. Has a low intrinsic ATPase activity which is markedly stimulated by HscB. In Shewanella baltica (strain OS195), this protein is Chaperone protein HscA homolog.